Reading from the N-terminus, the 348-residue chain is Pheromone P-factor receptor (348 aa).

Helical transmembrane passes span 46-69 (LLTG…VCLL), 79-103 (VFVF…TICS), 125-141 (VFNI…IFTA), 162-180 (IMTV…FWIT), 207-225 (YFIA…SGVF), 249-267 (CILV…FTII), and 283-301 (CLLI…STAL).

This sequence belongs to the G-protein coupled receptor 4 family.

The protein localises to the membrane. Functionally, receptor for the peptide pheromone P-factor, a mating factor of S.pombe. Pheromone signaling is essential for initiation of meiosis in S.pombe; P-factor signaling alone may be sufficient. The chain is Pheromone P-factor receptor (mam2) from Schizosaccharomyces pombe (strain 972 / ATCC 24843) (Fission yeast).